Here is a 58-residue protein sequence, read N- to C-terminus: Keratin-associated protein 21-3 (58 aa).

As to quaternary structure, interacts with hair keratins.

In the hair cortex, hair keratin intermediate filaments are embedded in an interfilamentous matrix, consisting of hair keratin-associated proteins (KRTAP), which are essential for the formation of a rigid and resistant hair shaft through their extensive disulfide bond cross-linking with abundant cysteine residues of hair keratins. The matrix proteins include the high-sulfur and high-glycine-tyrosine keratins. The chain is Keratin-associated protein 21-3 (KRTAP21-3) from Homo sapiens (Human).